Here is a 186-residue protein sequence, read N- to C-terminus: Ribosome rescue factor SmrB (186 aa).

A Smr domain is found at 99–174 (IDLHGLTQHQ…SDAAIIVIIE (76 aa)).

Belongs to the SmrB family. Associates with collided ribosomes, but not with correctly translating polysomes.

Functionally, acts as a ribosome collision sensor. Detects stalled/collided disomes (pairs of ribosomes where the leading ribosome is stalled and a second ribosome has collided with it) and endonucleolytically cleaves mRNA at the 5' boundary of the stalled ribosome. Stalled/collided disomes form a new interface (primarily via the 30S subunits) that binds SmrB. Cleaved mRNA becomes available for tmRNA ligation, leading to ribosomal subunit dissociation and rescue of stalled ribosomes. This is Ribosome rescue factor SmrB from Buchnera aphidicola subsp. Acyrthosiphon pisum (strain Tuc7).